A 185-amino-acid polypeptide reads, in one-letter code: Ribosome-recycling factor (185 aa).

Belongs to the RRF family.

The protein localises to the cytoplasm. Functionally, responsible for the release of ribosomes from messenger RNA at the termination of protein biosynthesis. May increase the efficiency of translation by recycling ribosomes from one round of translation to another. The polypeptide is Ribosome-recycling factor (Streptococcus pyogenes serotype M18 (strain MGAS8232)).